Consider the following 286-residue polypeptide: 4-diphosphocytidyl-2-C-methyl-D-erythritol kinase (286 aa).

K10 is an active-site residue. Residue 94–104 participates in ATP binding; the sequence is PVAAGLAGGSS. Residue D136 is part of the active site.

The protein belongs to the GHMP kinase family. IspE subfamily.

It catalyses the reaction 4-CDP-2-C-methyl-D-erythritol + ATP = 4-CDP-2-C-methyl-D-erythritol 2-phosphate + ADP + H(+). Its pathway is isoprenoid biosynthesis; isopentenyl diphosphate biosynthesis via DXP pathway; isopentenyl diphosphate from 1-deoxy-D-xylulose 5-phosphate: step 3/6. Catalyzes the phosphorylation of the position 2 hydroxy group of 4-diphosphocytidyl-2C-methyl-D-erythritol. The sequence is that of 4-diphosphocytidyl-2-C-methyl-D-erythritol kinase from Exiguobacterium sibiricum (strain DSM 17290 / CCUG 55495 / CIP 109462 / JCM 13490 / 255-15).